The following is a 143-amino-acid chain: Nucleoside diphosphate kinase (143 aa).

ATP is bound by residues K11, F59, R87, T93, R104, and N114. The active-site Pros-phosphohistidine intermediate is the H117.

Belongs to the NDK family. Homotetramer. Requires Mg(2+) as cofactor.

It is found in the cytoplasm. It carries out the reaction a 2'-deoxyribonucleoside 5'-diphosphate + ATP = a 2'-deoxyribonucleoside 5'-triphosphate + ADP. The enzyme catalyses a ribonucleoside 5'-diphosphate + ATP = a ribonucleoside 5'-triphosphate + ADP. Functionally, major role in the synthesis of nucleoside triphosphates other than ATP. The ATP gamma phosphate is transferred to the NDP beta phosphate via a ping-pong mechanism, using a phosphorylated active-site intermediate. In Shewanella loihica (strain ATCC BAA-1088 / PV-4), this protein is Nucleoside diphosphate kinase.